The sequence spans 338 residues: Fructose-1,6-bisphosphatase class 1 (338 aa).

The Mg(2+) site is built by Glu-90, Asp-112, Leu-114, and Asp-115. Residues 115–118, Asn-207, and Lys-273 contribute to the substrate site; that span reads DGSS. Glu-279 serves as a coordination point for Mg(2+).

Belongs to the FBPase class 1 family. Homotetramer. Mg(2+) is required as a cofactor.

The protein localises to the cytoplasm. The enzyme catalyses beta-D-fructose 1,6-bisphosphate + H2O = beta-D-fructose 6-phosphate + phosphate. Its pathway is carbohydrate biosynthesis; gluconeogenesis. In Stenotrophomonas maltophilia (strain K279a), this protein is Fructose-1,6-bisphosphatase class 1.